The chain runs to 194 residues: Peptidyl-tRNA hydrolase (194 aa).

Position 17 (tyrosine 17) interacts with tRNA. Histidine 22 (proton acceptor) is an active-site residue. 3 residues coordinate tRNA: phenylalanine 68, asparagine 70, and asparagine 116.

This sequence belongs to the PTH family. As to quaternary structure, monomer.

The protein resides in the cytoplasm. The enzyme catalyses an N-acyl-L-alpha-aminoacyl-tRNA + H2O = an N-acyl-L-amino acid + a tRNA + H(+). In terms of biological role, hydrolyzes ribosome-free peptidyl-tRNAs (with 1 or more amino acids incorporated), which drop off the ribosome during protein synthesis, or as a result of ribosome stalling. Functionally, catalyzes the release of premature peptidyl moieties from peptidyl-tRNA molecules trapped in stalled 50S ribosomal subunits, and thus maintains levels of free tRNAs and 50S ribosomes. The protein is Peptidyl-tRNA hydrolase of Pasteurella multocida (strain Pm70).